The primary structure comprises 24 residues: Neurotoxin 5 (24 aa).

In terms of domain architecture, LCN-type CS-alpha/beta spans 2-24 (RDAYIAQNYNCVYTCFKNDYCND).

The protein belongs to the long (4 C-C) scorpion toxin superfamily. Sodium channel inhibitor family. Alpha subfamily. In terms of tissue distribution, expressed by the venom gland.

The protein resides in the secreted. Binds to sodium channels (Nav) and inhibits the inactivation of the activated channels, thereby blocking neuronal transmission. This chain is Neurotoxin 5, found in Buthus occitanus tunetanus (Common European scorpion).